A 452-amino-acid polypeptide reads, in one-letter code: Ribosomal L1 domain-containing protein 1 (452 aa).

N-acetylmethionine is present on M1. Residues K119 and K253 each participate in a glycyl lysine isopeptide (Lys-Gly) (interchain with G-Cter in SUMO2) cross-link. Residues 277–350 (LRSLRKQELK…QKVTEECEEA (74 aa)) adopt a coiled-coil conformation. Positions 283 to 452 (QELKKRKREN…DKKTKAAHSN (170 aa)) are disordered. Residues 292–301 (NAKLKKESKM) show a composition bias toward basic and acidic residues. A compositionally biased stretch (polar residues) spans 309–319 (ATSLLTQSGLA). The span at 330 to 341 (QKKKTNKAHKKQ) shows a compositional bias: basic residues. 5 positions are modified to phosphothreonine: T334, T344, T360, T399, and T407. Residues 414–423 (KDVQEFRKPE) are compositionally biased toward basic and acidic residues. Positions 425–440 (SSFSTPRKSGKKASNT) are enriched in polar residues. T429 is subject to Phosphothreonine. K432 is subject to N6-acetyllysine. Phosphoserine is present on S433.

Belongs to the universal ribosomal protein uL1 family. Highly divergent. As to quaternary structure, interacts with ING1. Interacts with KPNA7 and KPNA2.

Its subcellular location is the nucleus. The protein resides in the nucleolus. Its function is as follows. Regulates cellular senescence through inhibition of PTEN translation. Acts as a pro-apoptotic regulator in response to DNA damage. The protein is Ribosomal L1 domain-containing protein 1 of Mus musculus (Mouse).